The chain runs to 313 residues: Foldase protein PrsA (313 aa).

A signal peptide spans 1–20; sequence MKKKLLAGAITLLSVATLAA. Cys21 is lipidated: N-palmitoyl cysteine. The S-diacylglycerol cysteine moiety is linked to residue Cys21. One can recognise a PpiC domain in the interval 143–241; it reads TPDVTAQIIR…SQYYIVKLTK (99 aa).

This sequence belongs to the PrsA family.

The protein localises to the cell membrane. The catalysed reaction is [protein]-peptidylproline (omega=180) = [protein]-peptidylproline (omega=0). Its function is as follows. Plays a major role in protein secretion by helping the post-translocational extracellular folding of several secreted proteins. The protein is Foldase protein PrsA of Streptococcus pneumoniae (strain P1031).